Here is a 461-residue protein sequence, read N- to C-terminus: Photosystem II CP43 reaction center protein (461 aa).

The propeptide occupies 1-2; that stretch reads ME. Position 3 is an N-acetylthreonine (Thr3). A Phosphothreonine modification is found at Thr3. 5 helical membrane-spanning segments follow: residues 57 to 81, 122 to 143, 166 to 188, 243 to 263, and 279 to 300; these read LFEV…PHIA, LIGP…KDKN, KAMY…RIIS, KPWG…LSYS, and WFNN…ASQA. Glu355 is a [CaMn4O5] cluster binding site. Residues 435-459 traverse the membrane as a helical segment; the sequence is RARAAAAGFEKGIDRDTEPVLSMKP.

The protein belongs to the PsbB/PsbC family. PsbC subfamily. PSII is composed of 1 copy each of membrane proteins PsbA, PsbB, PsbC, PsbD, PsbE, PsbF, PsbH, PsbI, PsbJ, PsbK, PsbL, PsbM, PsbT, PsbX, PsbY, PsbZ, Psb30/Ycf12, at least 3 peripheral proteins of the oxygen-evolving complex and a large number of cofactors. It forms dimeric complexes. Binds multiple chlorophylls and provides some of the ligands for the Ca-4Mn-5O cluster of the oxygen-evolving complex. It may also provide a ligand for a Cl- that is required for oxygen evolution. PSII binds additional chlorophylls, carotenoids and specific lipids. serves as cofactor.

It localises to the plastid. Its subcellular location is the chloroplast thylakoid membrane. One of the components of the core complex of photosystem II (PSII). It binds chlorophyll and helps catalyze the primary light-induced photochemical processes of PSII. PSII is a light-driven water:plastoquinone oxidoreductase, using light energy to abstract electrons from H(2)O, generating O(2) and a proton gradient subsequently used for ATP formation. The chain is Photosystem II CP43 reaction center protein from Oltmannsiellopsis viridis (Marine flagellate).